A 193-amino-acid chain; its full sequence is UPF0301 protein SCO2948 (193 aa).

The protein belongs to the UPF0301 (AlgH) family.

The polypeptide is UPF0301 protein SCO2948 (Streptomyces coelicolor (strain ATCC BAA-471 / A3(2) / M145)).